Consider the following 372-residue polypeptide: Anhydro-N-acetylmuramic acid kinase (372 aa).

21–28 (GTSMDGVD) lines the ATP pocket.

This sequence belongs to the anhydro-N-acetylmuramic acid kinase family.

The catalysed reaction is 1,6-anhydro-N-acetyl-beta-muramate + ATP + H2O = N-acetyl-D-muramate 6-phosphate + ADP + H(+). It participates in amino-sugar metabolism; 1,6-anhydro-N-acetylmuramate degradation. The protein operates within cell wall biogenesis; peptidoglycan recycling. Catalyzes the specific phosphorylation of 1,6-anhydro-N-acetylmuramic acid (anhMurNAc) with the simultaneous cleavage of the 1,6-anhydro ring, generating MurNAc-6-P. Is required for the utilization of anhMurNAc either imported from the medium or derived from its own cell wall murein, and thus plays a role in cell wall recycling. The polypeptide is Anhydro-N-acetylmuramic acid kinase (Bordetella avium (strain 197N)).